The primary structure comprises 30 residues: Cytochrome c3, 50 kDa (30 aa).

As to quaternary structure, monomer. In terms of processing, binds 4 heme groups per subunit.

It localises to the periplasm. Participates in sulfate respiration coupled with phosphorylation by transferring electrons from the enzyme dehydrogenase to ferredoxin. This is Cytochrome c3, 50 kDa from Desulfuromonas acetoxidans (Chloropseudomonas ethylica).